We begin with the raw amino-acid sequence, 372 residues long: Cyclic GMP-AMP synthase-like receptor (372 aa).

GTP is bound at residue Thr68. ATP is bound by residues Ser70 and 82-84 (EFD). Mg(2+) contacts are provided by Glu82, Asp84, and Asp190. GTP contacts are provided by residues Asp190 and 236–243 (LVCAPYWE). ATP is bound by residues 240–243 (PYWE), Lys261, and 274–278 (SYTIK).

The protein belongs to the mab-21 family. The cofactor is Mg(2+). Mn(2+) is required as a cofactor.

It catalyses the reaction GTP + ATP = 3',2'-cGAMP + 2 diphosphate. The catalysed reaction is GTP + ATP = pppA(2'-5')pG + diphosphate. It carries out the reaction pppA(2'-5')pG = 3',2'-cGAMP + diphosphate. The enzyme activity is specifically activated by double-stranded RNA (dsRNA). Nucleotidyltransferase that catalyzes the formation of cyclic GMP-AMP (3',2'-cGAMP) from ATP and GTP and plays a key role in innate immunity. Synthesizes 3',2'-cGAMP in a two-step reaction through production of the linear intermediate pppA(2'-5')pG. Acts as a key sensor of double-stranded RNA (dsRNA), the presence of dsRNA in the cytoplasm being a danger signal that triggers the immune responses. Directly binds dsRNA longer than 15 bp, activating the nucleotidyltransferase activity, leading to synthesis of 3',2'-cGAMP, a second messenger that binds to and activates Sting, thereby triggering the antiviral immune response via activation of the NF-kappa-B transcription factor Rel (Relish). In Drosophila eugracilis (Fruit fly), this protein is Cyclic GMP-AMP synthase-like receptor.